Reading from the N-terminus, the 942-residue chain is UvrABC system protein A (942 aa).

32–39 (GLSGSGKS) contacts ATP. A C4-type zinc finger spans residues 251–278 (CPVCGFTVPELEPRLFSFNAPFGSCPTC). 2 ABC transporter domains span residues 308-589 (WNPI…KKSI) and 609-937 (GNGR…HYLK). Residue 641–648 (GVSGSGKS) coordinates ATP. A C4-type zinc finger spans residues 740 to 766 (CEACSGDGIIKIEMHFLPDVYVPCEVC).

It belongs to the ABC transporter superfamily. UvrA family. In terms of assembly, forms a heterotetramer with UvrB during the search for lesions.

It is found in the cytoplasm. Its function is as follows. The UvrABC repair system catalyzes the recognition and processing of DNA lesions. UvrA is an ATPase and a DNA-binding protein. A damage recognition complex composed of 2 UvrA and 2 UvrB subunits scans DNA for abnormalities. When the presence of a lesion has been verified by UvrB, the UvrA molecules dissociate. This chain is UvrABC system protein A, found in Streptococcus pyogenes serotype M18 (strain MGAS8232).